Reading from the N-terminus, the 1477-residue chain is Alpha-1-inhibitor 3 (1477 aa).

Residues 1–24 (MKKDREAQLCLFSALLAFLPFASL) form the signal peptide. C48 and C86 are oxidised to a cystine. N-linked (GlcNAc...) asparagine glycosylation is found at N55 and N247. Intrachain disulfides connect C251–C295 and C269–C283. Residues N301, N321, N393, and N508 are each glycosylated (N-linked (GlcNAc...) asparagine). Intrachain disulfides connect C468-C563, C595-C774, and C643-C678. Residues 601-750 (DQSVLLQKPE…TWIWDLVTVN (150 aa)) form a bait region (approximate) region. 3 N-linked (GlcNAc...) asparagine glycosylation sites follow: N750, N777, and N872. 4 disulfides stabilise this stretch: C850/C886, C924/C1324, C1082/C1130, and C1355/C1470. The isoglutamyl cysteine thioester (Cys-Gln) cross-link spans 975-978 (CGEQ). N994 carries an N-linked (GlcNAc...) asparagine glycan. Residues N1143, N1314, and N1427 are each glycosylated (N-linked (GlcNAc...) asparagine).

It belongs to the protease inhibitor I39 (alpha-2-macroglobulin) family. In terms of assembly, monomer.

The protein resides in the secreted. In terms of biological role, protease inhibitor with a wide spectrum of protein targets, which attaches through its thioester function. In Rattus norvegicus (Rat), this protein is Alpha-1-inhibitor 3 (A1i3).